Here is a 248-residue protein sequence, read N- to C-terminus: tRNA (guanine-N(1)-)-methyltransferase (248 aa).

Residues G116 and 135-140 contribute to the S-adenosyl-L-methionine site; that span reads IGDFVL.

It belongs to the RNA methyltransferase TrmD family. In terms of assembly, homodimer.

Its subcellular location is the cytoplasm. It catalyses the reaction guanosine(37) in tRNA + S-adenosyl-L-methionine = N(1)-methylguanosine(37) in tRNA + S-adenosyl-L-homocysteine + H(+). In terms of biological role, specifically methylates guanosine-37 in various tRNAs. This chain is tRNA (guanine-N(1)-)-methyltransferase, found in Anaeromyxobacter sp. (strain Fw109-5).